The primary structure comprises 106 residues: uncharacterized protein (106 aa).

2 consecutive transmembrane segments (helical) span residues 43–63 and 86–106; these read CSTI…LAIV and IPEL…FSLF.

The protein resides in the membrane. This is an uncharacterized protein from Saccharomyces cerevisiae (strain ATCC 204508 / S288c) (Baker's yeast).